The primary structure comprises 84 residues: LYR motif-containing protein 5B (84 aa).

It belongs to the complex I LYR family.

In Danio rerio (Zebrafish), this protein is LYR motif-containing protein 5B (lyrm5b).